The following is a 363-amino-acid chain: Phosphoserine aminotransferase (363 aa).

An L-glutamate-binding site is contributed by Arg-42. Pyridoxal 5'-phosphate-binding positions include 76–77 (GR), Trp-102, Thr-156, Asp-175, and Gln-198. Lys-199 bears the N6-(pyridoxal phosphate)lysine mark. 240 to 241 (NT) serves as a coordination point for pyridoxal 5'-phosphate.

It belongs to the class-V pyridoxal-phosphate-dependent aminotransferase family. SerC subfamily. In terms of assembly, homodimer. Pyridoxal 5'-phosphate is required as a cofactor.

The protein localises to the cytoplasm. It catalyses the reaction O-phospho-L-serine + 2-oxoglutarate = 3-phosphooxypyruvate + L-glutamate. The catalysed reaction is 4-(phosphooxy)-L-threonine + 2-oxoglutarate = (R)-3-hydroxy-2-oxo-4-phosphooxybutanoate + L-glutamate. It participates in amino-acid biosynthesis; L-serine biosynthesis; L-serine from 3-phospho-D-glycerate: step 2/3. It functions in the pathway cofactor biosynthesis; pyridoxine 5'-phosphate biosynthesis; pyridoxine 5'-phosphate from D-erythrose 4-phosphate: step 3/5. Functionally, catalyzes the reversible conversion of 3-phosphohydroxypyruvate to phosphoserine and of 3-hydroxy-2-oxo-4-phosphonooxybutanoate to phosphohydroxythreonine. In Shewanella sp. (strain MR-7), this protein is Phosphoserine aminotransferase.